We begin with the raw amino-acid sequence, 490 residues long: Glutamate--tRNA ligase (490 aa).

Positions 9–19 (PSPTGLQHIGG) match the 'HIGH' region motif. The 'KMSKS' region motif lies at 251-255 (KLSKR). Residue Lys-254 coordinates ATP.

The protein belongs to the class-I aminoacyl-tRNA synthetase family. Glutamate--tRNA ligase type 1 subfamily. Monomer.

It is found in the cytoplasm. It carries out the reaction tRNA(Glu) + L-glutamate + ATP = L-glutamyl-tRNA(Glu) + AMP + diphosphate. Its function is as follows. Catalyzes the attachment of glutamate to tRNA(Glu) in a two-step reaction: glutamate is first activated by ATP to form Glu-AMP and then transferred to the acceptor end of tRNA(Glu). The polypeptide is Glutamate--tRNA ligase (Borreliella burgdorferi (strain ATCC 35210 / DSM 4680 / CIP 102532 / B31) (Borrelia burgdorferi)).